A 151-amino-acid chain; its full sequence is MRTFESVADLAAAAGEKVGQSDWVTITQEEVNLFADATGDHQWIHVDPERAAAGPFGTTIAHGFMTLALLPRLQHQMYTVKGVKLAINYGLNKVRFPAPVPVGSRVRATSSLVGVEDLGNGTVQATVSTTVEVEGSAKPACVAESIVRYVA.

The MaoC-like domain maps to 11 to 131; it reads AAAAGEKVGQ…TVQATVSTTV (121 aa). Substrate-binding positions include 60–63, 86–89, 97–99, Gln124, and Arg148; these read IAHG, AINY, and PAP.

Belongs to the enoyl-CoA hydratase/isomerase family. In terms of assembly, homodimer.

It catalyses the reaction a (3R)-3-hydroxyacyl-CoA = a (2E)-enoyl-CoA + H2O. Shows trans-enoyl-CoA hydratase/3-hydroxyacyl-CoA dehydratase activity. This chain is 3-hydroxyacyl-thioester dehydratase Z, found in Mycobacterium bovis (strain ATCC BAA-935 / AF2122/97).